The sequence spans 151 residues: MRPWLLACLVACFVGAWAPAIHAQGAFEDCCLAYHSHIKWRLLRRAHSYQRQDVSGSCNLPAVIFFFPQKDKMVCGKPGAKWVQFGMKILDNRNKKDSKPHHSGRRFFQGPQSGVRKLSSGTSRPLLLKFSGPTRSSKRKASLLTTAIPGP.

An N-terminal signal peptide occupies residues 1 to 23; sequence MRPWLLACLVACFVGAWAPAIHA. 2 disulfide bridges follow: Cys-30-Cys-58 and Cys-31-Cys-75. A disordered region spans residues 93 to 151; it reads RNKKDSKPHHSGRRFFQGPQSGVRKLSSGTSRPLLLKFSGPTRSSKRKASLLTTAIPGP.

Belongs to the intercrine beta (chemokine CC) family.

The protein localises to the secreted. In terms of biological role, potentially involved in T-cell development. Recombinant protein shows chemotactic activity on thymocytes, macrophages, THP-1 cells, and dendritics cells but is inactive on peripheral blood lymphocytes and neutrophils. Binds to CCR9. Binds to atypical chemokine receptor ACKR4 and mediates the recruitment of beta-arrestin (ARRB1/2) to ACKR4. The chain is C-C motif chemokine 25 (CCL25) from Sus scrofa (Pig).